The primary structure comprises 574 residues: Aspartate--tRNA ligase (574 aa).

L-aspartate is bound at residue Glu-172. Positions 196–199 (QIFK) are aspartate. Residue Arg-218 participates in L-aspartate binding. ATP contacts are provided by residues 218-220 (RDE) and Gln-227. His-453 provides a ligand contact to L-aspartate. Glu-487 is an ATP binding site. Arg-494 lines the L-aspartate pocket. Position 539 to 542 (539 to 542 (GLDR)) interacts with ATP.

It belongs to the class-II aminoacyl-tRNA synthetase family. Type 1 subfamily. In terms of assembly, homodimer.

The protein resides in the cytoplasm. It catalyses the reaction tRNA(Asp) + L-aspartate + ATP = L-aspartyl-tRNA(Asp) + AMP + diphosphate. Its function is as follows. Catalyzes the attachment of L-aspartate to tRNA(Asp) in a two-step reaction: L-aspartate is first activated by ATP to form Asp-AMP and then transferred to the acceptor end of tRNA(Asp). The chain is Aspartate--tRNA ligase from Blochmanniella pennsylvanica (strain BPEN).